Here is a 904-residue protein sequence, read N- to C-terminus: Nitrate reductase [NADH] 2 (904 aa).

2 stretches are compositionally biased toward polar residues: residues 1 to 10 (MAASVENRQF) and 35 to 50 (PSPN…NSTI). Residues 1-65 (MAASVENRQF…SSEDDDDDDE (65 aa)) are disordered. Acidic residues predominate over residues 56–65 (SSEDDDDDDE). Residue cysteine 183 coordinates Mo-molybdopterin. The Cytochrome b5 heme-binding domain maps to 531–606 (SKMYSMSEVR…LEDFRIGELI (76 aa)). Residues histidine 566 and histidine 589 each coordinate heme. One can recognise an FAD-binding FR-type domain in the interval 647–759 (REKIPCKLID…KGPLGHIEYQ (113 aa)). FAD-binding positions include 699–702 (RAYT), 716–720 (VVKIY), phenylalanine 721, phenylalanine 728, 733–735 (QMS), and threonine 786.

It belongs to the nitrate reductase family. Homodimer. It depends on FAD as a cofactor. Heme is required as a cofactor. The cofactor is Mo-molybdopterin.

The catalysed reaction is nitrite + NAD(+) + H2O = nitrate + NADH + H(+). Its activity is regulated as follows. Regulated by the nitrogen source and controlled by the circadian rhythm. Its function is as follows. Nitrate reductase is a key enzyme involved in the first step of nitrate assimilation in plants, fungi and bacteria. This Nicotiana tabacum (Common tobacco) protein is Nitrate reductase [NADH] 2 (NIA2).